The following is a 289-amino-acid chain: Elongation factor Ts (289 aa).

Positions 82–85 (TDFL) are involved in Mg(2+) ion dislocation from EF-Tu.

This sequence belongs to the EF-Ts family.

It localises to the cytoplasm. In terms of biological role, associates with the EF-Tu.GDP complex and induces the exchange of GDP to GTP. It remains bound to the aminoacyl-tRNA.EF-Tu.GTP complex up to the GTP hydrolysis stage on the ribosome. This Pseudomonas paraeruginosa (strain DSM 24068 / PA7) (Pseudomonas aeruginosa (strain PA7)) protein is Elongation factor Ts.